The chain runs to 594 residues: MSKKRKWDDDYVRYWFTCVTEIDGTQRPQCVLCNSVFSNADLRPSKLSDHFNRQHGGIGGHDLSSLKHVPVPADQSETLKTFGVASQEDALLQASYQFAYLCAKEKNPHTIAEKLVKPCALEIAQIVLGPDAQKKLQQVPLSDDVIHSRIDEMSQDILQQVLEDIKASPLKVGIQLAETTDMDDCSQLMAFVRYIREREIVEEFLFCEPLQLTMKGKDVFNLFRDFFLKHKIALDVCGSVCTDGASSMLGENSEFVCCVKKEVPHIVITHCLVNPHTLVTKTLPTKLRDALFTVVRVINFIKGRAPNHRLFQAFFEEIGIEYSVLLFHTEMRWLSRGQILTHIFEMHEEINQFLHHQSSNLVDGFENKEFKIHLAYLADLFKHLNELSASMQRTGMNTVSAREKLSAFVRKFPFWLKRIEKRNFTNFPFLEEIVVSDNEALCIAAEITLHLQQLSSFFNGYFSVGDLDEASKWILDPFLFNLDFVDDGYLVKNDLAELRASGQILMEFETMKLEDFWCAQFTVFPSLAKTALEILIPFATTYLCELGFSSLLHFKTKSRSCLNMSDDIRVAISKKVPRFSDIIEQKLQLQQKSL.

This chain is Protein FAM200C (FAM200C), found in Bos taurus (Bovine).